The primary structure comprises 145 residues: 3-hydroxyacyl-[acyl-carrier-protein] dehydratase FabZ (145 aa).

Residue His-49 is part of the active site.

It belongs to the thioester dehydratase family. FabZ subfamily.

The protein resides in the cytoplasm. The catalysed reaction is a (3R)-hydroxyacyl-[ACP] = a (2E)-enoyl-[ACP] + H2O. In terms of biological role, involved in unsaturated fatty acids biosynthesis. Catalyzes the dehydration of short chain beta-hydroxyacyl-ACPs and long chain saturated and unsaturated beta-hydroxyacyl-ACPs. This chain is 3-hydroxyacyl-[acyl-carrier-protein] dehydratase FabZ, found in Rickettsia bellii (strain RML369-C).